The chain runs to 391 residues: Phosphoglycerate kinase (391 aa).

Substrate is bound by residues 21-23, arginine 36, 59-62, arginine 113, and arginine 146; these read DLN and HLGR. ATP is bound by residues lysine 197, glutamate 319, and 345-348; that span reads GGDT.

The protein belongs to the phosphoglycerate kinase family. As to quaternary structure, monomer.

The protein localises to the cytoplasm. It carries out the reaction (2R)-3-phosphoglycerate + ATP = (2R)-3-phospho-glyceroyl phosphate + ADP. It participates in carbohydrate degradation; glycolysis; pyruvate from D-glyceraldehyde 3-phosphate: step 2/5. The sequence is that of Phosphoglycerate kinase from Shewanella baltica (strain OS155 / ATCC BAA-1091).